Here is a 57-residue protein sequence, read N- to C-terminus: uncharacterized protein (57 aa).

A helical membrane pass occupies residues Val-12–Thr-34.

Its subcellular location is the membrane. This is an uncharacterized protein from Pasteurella multocida (strain Pm70).